The primary structure comprises 180 residues: MTNRLKEKYVKEMTPALIEKFNYTSSMQVPKIEKIVLNMGVGDAVSNAKNLDKAVEELGLIAGQKPLITKAKKSIAGFRLREGMPIGAKVTLRGERMYDFLDKLVNVSLPRVRDFHGVSAKSFDGRGNYTLGVREQLIFPEIDYDKVDRVRGLDVVIVTTSNTDEEARELLTQFGMPFAK.

This sequence belongs to the universal ribosomal protein uL5 family. Part of the 50S ribosomal subunit; part of the 5S rRNA/L5/L18/L25 subcomplex. Contacts the 5S rRNA and the P site tRNA. Forms a bridge to the 30S subunit in the 70S ribosome.

Its function is as follows. This is one of the proteins that bind and probably mediate the attachment of the 5S RNA into the large ribosomal subunit, where it forms part of the central protuberance. In the 70S ribosome it contacts protein S13 of the 30S subunit (bridge B1b), connecting the 2 subunits; this bridge is implicated in subunit movement. Contacts the P site tRNA; the 5S rRNA and some of its associated proteins might help stabilize positioning of ribosome-bound tRNAs. The protein is Large ribosomal subunit protein uL5 of Latilactobacillus sakei subsp. sakei (strain 23K) (Lactobacillus sakei subsp. sakei).